Consider the following 307-residue polypeptide: Atrochrysone carboxyl ACP thioesterase (307 aa).

Zn(2+) contacts are provided by His104, His106, Asp108, and His109. Catalysis depends on Asp108, which acts as the Proton donor/acceptor.

It belongs to the metallo-beta-lactamase superfamily. The cofactor is Zn(2+).

The enzyme catalyses atrochrysone carboxyl-[ACP] + H2O = atrochrysone carboxylate + holo-[ACP] + H(+). Its pathway is secondary metabolite biosynthesis. In terms of biological role, atrochrysone carboxyl ACP thioesterase; part of the gene cluster that mediates the biosynthesis of monodictyphenone, a prenyl xanthone derivative. The pathway begins with the synthesis of atrochrysone thioester by the polyketide synthase (PKS) mdpG. The atrochrysone carboxyl ACP thioesterase mdpF then breaks the thioester bond and releases the atrochrysone carboxylic acid from mdpG. The atrochrysone carboxylic acid is then converted to atrochrysone which is further transformed into emodin anthrone. The next step is performed by the anthrone oxygenase mdpH that catalyzes the oxidation of emodinanthrone to emodin. Emodin is further modified to yield monodictyphenone via several steps involving mdpB, mdpC mdpJ, mdpK and mdpL. The short chain dehydrogenase mdpC converts the tautomers of emodin hydroquinone into the 3-hydroxy-3,4-dihydroan-thracen-1(2H)-one derivative. These enzymes with xptA, xptB and xptC are also proposed to be involved in the synthesis of shamixanthone from emodin. Especially, direct reduction of emodin by the short chain dehydrogenase mdpC followed by dehydration catalyzed by the scytalone dehydratase-like protein mdpB gives loss of oxygen and formation of chrysophanol intermediate in two simple steps. In Emericella nidulans (strain FGSC A4 / ATCC 38163 / CBS 112.46 / NRRL 194 / M139) (Aspergillus nidulans), this protein is Atrochrysone carboxyl ACP thioesterase.